The following is a 128-amino-acid chain: Large ribosomal subunit protein eL8 (128 aa).

Belongs to the eukaryotic ribosomal protein eL8 family. As to quaternary structure, part of the 50S ribosomal subunit. Probably part of the RNase P complex.

Its subcellular location is the cytoplasm. In terms of biological role, multifunctional RNA-binding protein that recognizes the K-turn motif in ribosomal RNA, the RNA component of RNase P, box H/ACA, box C/D and box C'/D' sRNAs. The polypeptide is Large ribosomal subunit protein eL8 (Ignicoccus hospitalis (strain KIN4/I / DSM 18386 / JCM 14125)).